The primary structure comprises 439 residues: Trigger factor (439 aa).

Residues 163 to 248 (GDIAVIDFEG…LNQIKERVLP (86 aa)) form the PPIase FKBP-type domain.

The protein belongs to the FKBP-type PPIase family. Tig subfamily.

Its subcellular location is the cytoplasm. The enzyme catalyses [protein]-peptidylproline (omega=180) = [protein]-peptidylproline (omega=0). Its function is as follows. Involved in protein export. Acts as a chaperone by maintaining the newly synthesized protein in an open conformation. Functions as a peptidyl-prolyl cis-trans isomerase. The polypeptide is Trigger factor (Syntrophotalea carbinolica (strain DSM 2380 / NBRC 103641 / GraBd1) (Pelobacter carbinolicus)).